Consider the following 502-residue polypeptide: ATP synthase subunit alpha (502 aa).

Residues 117–139 form a disordered region; that stretch reads GMGPVLTSKTRPIESPAPGVMDR. An ATP-binding site is contributed by 169–176; sequence GDRQTGKT.

The protein belongs to the ATPase alpha/beta chains family. F-type ATPases have 2 components, CF(1) - the catalytic core - and CF(0) - the membrane proton channel. CF(1) has five subunits: alpha(3), beta(3), gamma(1), delta(1), epsilon(1). CF(0) has three main subunits: a(1), b(2) and c(9-12). The alpha and beta chains form an alternating ring which encloses part of the gamma chain. CF(1) is attached to CF(0) by a central stalk formed by the gamma and epsilon chains, while a peripheral stalk is formed by the delta and b chains.

The protein resides in the cell membrane. It carries out the reaction ATP + H2O + 4 H(+)(in) = ADP + phosphate + 5 H(+)(out). In terms of biological role, produces ATP from ADP in the presence of a proton gradient across the membrane. The alpha chain is a regulatory subunit. This chain is ATP synthase subunit alpha, found in Bacillus licheniformis (strain ATCC 14580 / DSM 13 / JCM 2505 / CCUG 7422 / NBRC 12200 / NCIMB 9375 / NCTC 10341 / NRRL NRS-1264 / Gibson 46).